A 400-amino-acid chain; its full sequence is Elongation factor Tu 2 (400 aa).

One can recognise a tr-type G domain in the interval 10–209; the sequence is KPHLNIGTIG…AVDSYIPLPQ (200 aa). Residues 19–26 are G1; the sequence is GHIDHGKT. GTP is bound at residue 19–26; it reads GHIDHGKT. Thr-26 serves as a coordination point for Mg(2+). Positions 60–64 are G2; it reads GITIN. A G3 region spans residues 81-84; it reads DCPG. GTP is bound by residues 81–85 and 136–139; these read DCPGH and NKID. Residues 136-139 are G4; it reads NKID. The interval 174–176 is G5; sequence SAL.

This sequence belongs to the TRAFAC class translation factor GTPase superfamily. Classic translation factor GTPase family. EF-Tu/EF-1A subfamily. Monomer.

It is found in the cytoplasm. The enzyme catalyses GTP + H2O = GDP + phosphate + H(+). In terms of biological role, GTP hydrolase that promotes the GTP-dependent binding of aminoacyl-tRNA to the A-site of ribosomes during protein biosynthesis. This Syntrophomonas wolfei subsp. wolfei (strain DSM 2245B / Goettingen) protein is Elongation factor Tu 2.